We begin with the raw amino-acid sequence, 394 residues long: Phosphoglycerate kinase (394 aa).

Residues 21–23 (DFN), R36, 59–62 (HLGR), R118, and R151 each bind substrate. S183 carries the phosphoserine modification. ATP is bound at residue K201. Position 299 is a phosphothreonine (T299). ATP contacts are provided by residues E323 and 350-353 (GGDS).

Belongs to the phosphoglycerate kinase family. As to quaternary structure, monomer.

The protein resides in the cytoplasm. It carries out the reaction (2R)-3-phosphoglycerate + ATP = (2R)-3-phospho-glyceroyl phosphate + ADP. The protein operates within carbohydrate degradation; glycolysis; pyruvate from D-glyceraldehyde 3-phosphate: step 2/5. This is Phosphoglycerate kinase from Geobacillus sp. (strain WCH70).